We begin with the raw amino-acid sequence, 213 residues long: uncharacterized protein (213 aa).

Catalysis depends on charge relay system residues Ser-114, Asp-162, and His-194.

This sequence belongs to the AB hydrolase superfamily. AB hydrolase 2 family.

This is an uncharacterized protein from Rickettsia bellii (strain RML369-C).